Consider the following 164-residue polypeptide: Peptidyl-prolyl cis-trans isomerase A (164 aa).

Met-1 bears the N-acetylmethionine mark. Position 2 is an N-acetylvaline; in Peptidyl-prolyl cis-trans isomerase A, N-terminally processed (Val-2). The PPIase cyclophilin-type domain occupies 7 to 163; the sequence is FFDIAVDGEP…KKITIANCGQ (157 aa). Lys-28 carries the N6-acetyllysine; alternate modification. Lys-28 participates in a covalent cross-link: Glycyl lysine isopeptide (Lys-Gly) (interchain with G-Cter in SUMO2); alternate. A Glycyl lysine isopeptide (Lys-Gly) (interchain with G-Cter in ubiquitin); alternate cross-link involves residue Lys-28. Lys-44 and Lys-76 each carry N6-acetyllysine. Position 77 is a phosphoserine (Ser-77). Lys-82 bears the N6-acetyllysine; alternate mark. Lys-82 participates in a covalent cross-link: Glycyl lysine isopeptide (Lys-Gly) (interchain with G-Cter in SUMO2); alternate. The residue at position 93 (Thr-93) is a Phosphothreonine. N-linked (GlcNAc...) asparagine glycosylation occurs at Asn-108. An N6-acetyllysine mark is found at Lys-125 and Lys-133.

Belongs to the cyclophilin-type PPIase family. PPIase A subfamily. Interacts with protein phosphatase PPP3CA/calcineurin A. Interacts with isoform 2 of BSG/CD147. Interacts with FOXO1; the interaction promotes FOXO1 dephosphorylation, nuclear accumulation and transcriptional activity. Interacts with integrin ITGA2B:ITGB3; the interaction is ROS and peptidyl-prolyl cis-trans isomerase (PPIase) activity-dependent and is increased in the presence of thrombin. Interacts with MAP3K5. Interacts with TARDBP; the interaction is dependent on the RNA-binding activity of TARDBP and the PPIase activity of PPIA/CYPA and the acetylation of PPIA/CYPA at Lys-125 favors the interaction. Interacts with HNRNPA1, HNRNPA2B1, HNRNPC, RBMX, HNRNPK and HNRNPM. Acetylation at Lys-125 markedly inhibits catalysis of cis to trans isomerization. PPIA acetylation also antagonizes the immunosuppressive effects of cyclosporine by inhibiting the sequential steps of cyclosporine binding and calcineurin inhibition. Acetylation at Lys-125 favors the interaction with TARDBP.

It is found in the cytoplasm. The protein resides in the secreted. The protein localises to the nucleus. It catalyses the reaction [protein]-peptidylproline (omega=180) = [protein]-peptidylproline (omega=0). With respect to regulation, binds cyclosporin A (CsA). CsA mediates some of its effects via an inhibitory action on PPIase. Catalyzes the cis-trans isomerization of proline imidic peptide bonds in oligopeptides. Exerts a strong chemotactic effect on leukocytes partly through activation of one of its membrane receptors BSG/CD147, initiating a signaling cascade that culminates in MAPK/ERK activation. Activates endothelial cells (ECs) in a proinflammatory manner by stimulating activation of NF-kappa-B and ERK, JNK and p38 MAP-kinases and by inducing expression of adhesion molecules including SELE and VCAM1. Induces apoptosis in ECs by promoting the FOXO1-dependent expression of CCL2 and BCL2L11 which are involved in EC chemotaxis and apoptosis. In response to oxidative stress, initiates proapoptotic and antiapoptotic signaling in ECs via activation of NF-kappa-B and AKT1 and up-regulation of antiapoptotic protein BCL2. Negatively regulates MAP3K5/ASK1 kinase activity, autophosphorylation and oxidative stress-induced apoptosis mediated by MAP3K5/ASK1. Necessary for the assembly of TARDBP in heterogeneous nuclear ribonucleoprotein (hnRNP) complexes and regulates TARDBP binding to RNA UG repeats and TARDBP-dependent expression of HDAC6, ATG7 and VCP which are involved in clearance of protein aggregates. Plays an important role in platelet activation and aggregation. Regulates calcium mobilization and integrin ITGA2B:ITGB3 bidirectional signaling via increased ROS production as well as by facilitating the interaction between integrin and the cell cytoskeleton. Binds heparan sulfate glycosaminoglycans. This Oryctolagus cuniculus (Rabbit) protein is Peptidyl-prolyl cis-trans isomerase A (PPIA).